Reading from the N-terminus, the 712-residue chain is Polyribonucleotide nucleotidyltransferase (712 aa).

Mg(2+)-binding residues include Asp-485 and Asp-491. A KH domain is found at 552 to 611 (PKITTISVPKEKIRDVIGQGGKVIREIVEYSGAKIDINDDGTIMIAASSEDQATRAIERI). Positions 621 to 689 (GAIYTGKVVK…DRGKVKLSMR (69 aa)) constitute an S1 motif domain.

The protein belongs to the polyribonucleotide nucleotidyltransferase family. The cofactor is Mg(2+).

The protein resides in the cytoplasm. It catalyses the reaction RNA(n+1) + phosphate = RNA(n) + a ribonucleoside 5'-diphosphate. Involved in mRNA degradation. Catalyzes the phosphorolysis of single-stranded polyribonucleotides processively in the 3'- to 5'-direction. The protein is Polyribonucleotide nucleotidyltransferase of Gluconacetobacter diazotrophicus (strain ATCC 49037 / DSM 5601 / CCUG 37298 / CIP 103539 / LMG 7603 / PAl5).